Reading from the N-terminus, the 720-residue chain is Engulfment and cell motility protein 2 (720 aa).

Residue Tyr48 is modified to Phosphotyrosine. The ELMO domain maps to 310-484; sequence QAQRDIIFEL…QVVREQITRA (175 aa). A Phosphoserine modification is found at Ser503. One can recognise a PH domain in the interval 553–674; the sequence is SSFRKIGNRR…LLGKDMSSEL (122 aa). Residues 700–707 carry the SH3-binding motif; it reads PEAPPPVP. Tyr717 is modified (phosphotyrosine).

Interacts directly with the SH3-domain of DOCK1 via its SH3-binding site. Probably forms a heterotrimeric complex with DOCK1 and RAC1. Interacts with ARHGEF16, DOCK4 and EPHA2; mediates activation of RAC1 by EPHA2. Interacts with ADGRB3. Interacts with AUTS2; the interaction is direct.

The protein localises to the cytoplasm. The protein resides in the cytosol. It localises to the membrane. Involved in cytoskeletal rearrangements required for phagocytosis of apoptotic cells and cell motility. Acts in association with DOCK1 and CRK. Was initially proposed to be required in complex with DOCK1 to activate Rac Rho small GTPases. May enhance the guanine nucleotide exchange factor (GEF) activity of DOCK1. The chain is Engulfment and cell motility protein 2 (ELMO2) from Bos taurus (Bovine).